Reading from the N-terminus, the 313-residue chain is tRNA dimethylallyltransferase (313 aa).

10 to 17 (GPTASGKT) contacts ATP. 12 to 17 (TASGKT) contributes to the substrate binding site. Interaction with substrate tRNA stretches follow at residues 35–38 (DSAM), 159–163 (QRIQR), and 240–245 (RCVGYR).

It belongs to the IPP transferase family. Monomer. Requires Mg(2+) as cofactor.

The catalysed reaction is adenosine(37) in tRNA + dimethylallyl diphosphate = N(6)-dimethylallyladenosine(37) in tRNA + diphosphate. In terms of biological role, catalyzes the transfer of a dimethylallyl group onto the adenine at position 37 in tRNAs that read codons beginning with uridine, leading to the formation of N6-(dimethylallyl)adenosine (i(6)A). In Legionella pneumophila (strain Paris), this protein is tRNA dimethylallyltransferase.